We begin with the raw amino-acid sequence, 133 residues long: Putative nickel-responsive regulator (133 aa).

Ni(2+) contacts are provided by His74, His85, His87, and Cys93.

This sequence belongs to the transcriptional regulatory CopG/NikR family. Requires Ni(2+) as cofactor.

Functionally, transcriptional regulator. The sequence is that of Putative nickel-responsive regulator from Saccharolobus solfataricus (strain ATCC 35092 / DSM 1617 / JCM 11322 / P2) (Sulfolobus solfataricus).